A 34-amino-acid polypeptide reads, in one-letter code: Photosystem II reaction center protein M (34 aa).

Residues 5 to 25 (ILAFIATALFILVPTAFLLII) traverse the membrane as a helical segment.

Belongs to the PsbM family. As to quaternary structure, PSII is composed of 1 copy each of membrane proteins PsbA, PsbB, PsbC, PsbD, PsbE, PsbF, PsbH, PsbI, PsbJ, PsbK, PsbL, PsbM, PsbT, PsbX, PsbY, PsbZ, Psb30/Ycf12, at least 3 peripheral proteins of the oxygen-evolving complex and a large number of cofactors. It forms dimeric complexes.

Its subcellular location is the plastid. The protein localises to the chloroplast thylakoid membrane. Functionally, one of the components of the core complex of photosystem II (PSII). PSII is a light-driven water:plastoquinone oxidoreductase that uses light energy to abstract electrons from H(2)O, generating O(2) and a proton gradient subsequently used for ATP formation. It consists of a core antenna complex that captures photons, and an electron transfer chain that converts photonic excitation into a charge separation. This subunit is found at the monomer-monomer interface. The chain is Photosystem II reaction center protein M from Calycanthus floridus var. glaucus (Eastern sweetshrub).